The primary structure comprises 748 residues: Cysteine--tRNA ligase, cytoplasmic (748 aa).

A disordered region spans residues 1-25 (MAGSSGQQGKGRRVQPQWSPPAGTQ). Ala-2 bears the N-acetylalanine mark. Ser-19 is subject to Phosphoserine. A Zn(2+)-binding site is contributed by Cys-55. Gly-56 serves as a coordination point for L-cysteine. Residues 57–67 (PTVYDASHMGH) carry the 'HIGH' region motif. Thr-96 is an L-cysteine binding site. A 'KIIK' region motif is present at residues 101-104 (KIIK). 2 positions are modified to phosphoserine: Ser-305 and Ser-307. Residues Cys-348, His-373, and Glu-377 each coordinate Zn(2+). His-373 contacts L-cysteine. The 'KMSKS' region signature appears at 406-410 (KMSKS). ATP is bound at residue Lys-409. Basic and acidic residues-rich tracts occupy residues 654–679 (KRQVEEEKRKKKEEAARRKQEQEAAK) and 700–717 (KFDENGLPTHDAEGKELS). Disordered stretches follow at residues 654-686 (KRQVEEEKRKKKEEAARRKQEQEAAKLAKMKIP) and 700-721 (KFDENGLPTHDAEGKELSKGQA). Position 746 is a phosphoserine (Ser-746).

In terms of assembly, homodimer. Requires Zn(2+) as cofactor.

The protein localises to the cytoplasm. The catalysed reaction is tRNA(Cys) + L-cysteine + ATP = L-cysteinyl-tRNA(Cys) + AMP + diphosphate. In terms of biological role, catalyzes the ATP-dependent ligation of cysteine to tRNA(Cys). The polypeptide is Cysteine--tRNA ligase, cytoplasmic (CARS1) (Macaca fascicularis (Crab-eating macaque)).